The sequence spans 141 residues: Large ribosomal subunit protein uL14m (141 aa).

Residues 1–19 (MALSLSGLILPKLMQQRAF) constitute a mitochondrion transit peptide.

It belongs to the universal ribosomal protein uL14 family. Component of the mitochondrial ribosome large subunit (39S) which comprises a 16S rRNA and about 50 distinct proteins. Interacts with MALSU1.

It localises to the mitochondrion. Functionally, may form part of 2 intersubunit bridges in the assembled ribosome. Upon binding to MALSU1, intersubunit bridge formation is blocked, preventing ribosome formation and repressing translation. The chain is Large ribosomal subunit protein uL14m (mrpl14) from Danio rerio (Zebrafish).